The following is a 282-amino-acid chain: MTAAPAMSWWQVIVLAAAQGLTEFLPVSSSGHLAIVSRIFFSGDAGASFTAVSQLGTEAAVVIYFARDIVRILSAWLHGLVVKAHRNTDYRLGWYVIIGTIPICILGLFFKDDIRSGVRNLWVVVTALVVFSGVIALAEYVGRQSRHIERLTWRDAVVVGIAQTLALVPGVSRSGSTISAGLFLGLDRELAARFGFLLAIPAVFASGLFSLPDAFHPVTEGMSATGPQLLVATLIAFVLGLTAVAWLLRFLVRHNMYWFVGYRVLVGTGMLVLLATGTVAAT.

5 consecutive transmembrane segments (helical) span residues tyrosine 90–phenylalanine 110, leucine 121–valine 141, phenylalanine 194–alanine 214, glutamine 228–leucine 248, and methionine 256–threonine 276.

The protein belongs to the UppP family.

It localises to the cell membrane. It catalyses the reaction di-trans,octa-cis-undecaprenyl diphosphate + H2O = di-trans,octa-cis-undecaprenyl phosphate + phosphate + H(+). Functionally, catalyzes the dephosphorylation of undecaprenyl diphosphate (UPP). Confers resistance to bacitracin. The sequence is that of Undecaprenyl-diphosphatase from Mycobacterium tuberculosis (strain ATCC 25618 / H37Rv).